The primary structure comprises 443 residues: Threonine/serine transporter TdcC (443 aa).

11 helical membrane-spanning segments follow: residues 22-42, 44-64, 97-117, 140-160, 163-183, 207-227, 259-279, 319-339, 366-386, 389-409, and 423-443; these read TTWTLGLFGTAIGAGVLFFPI, AGFGGLIPILLMLVLAYPIAF, GVVITFLYFFAICPLLWIYGV, VVALFLLLLMAFVIWFGKDLM, VMSYLVWPFIASLVLISLSLI, ILVTVWLGISIMVFSFNFSPI, ASMLMVAVVMFFAFSCLFTLS, ASIIALVAIFKSFFGHYLGTL, ISMIFIMGSTWIVAYANPNIL, IEAMGAPIIASLLCLLPMYAI, and DNVFVTLIGLLTILNIVYKLF.

Belongs to the amino acid/polyamine transporter 2 family. SdaC/TdcC subfamily.

The protein localises to the cell inner membrane. It carries out the reaction L-threonine(in) + H(+)(in) = L-threonine(out) + H(+)(out). It catalyses the reaction L-serine(in) + H(+)(in) = L-serine(out) + H(+)(out). Functionally, involved in the import of threonine and serine into the cell, with the concomitant import of a proton (symport system). This chain is Threonine/serine transporter TdcC, found in Salmonella arizonae (strain ATCC BAA-731 / CDC346-86 / RSK2980).